The primary structure comprises 360 residues: Casein kinase II subunit alpha (360 aa).

Positions 38 to 323 constitute a Protein kinase domain; sequence YQLVRKLGRG…AQEAMGHEYF (286 aa). ATP contacts are provided by residues 44-52 and Lys-67; that span reads LGRGKYSEV. Asp-155 acts as the Proton acceptor in catalysis. The tract at residues 334–360 is disordered; the sequence is NGTEQADGQGASNSASSQSSDAKIDGA. Over residues 338–354 the composition is skewed to low complexity; the sequence is QADGQGASNSASSQSSD.

The protein belongs to the protein kinase superfamily. Ser/Thr protein kinase family. CK2 subfamily. Tetramer of two alpha and two beta chains. As to expression, expressed in a subset of the adult male sensory neurons: CEM head neurons, ray RnB neurons, and hook HOB tail neurons.

The protein localises to the cell projection. It localises to the axon. The protein resides in the cilium. Its subcellular location is the dendrite. It is found in the perikaryon. It carries out the reaction L-seryl-[protein] + ATP = O-phospho-L-seryl-[protein] + ADP + H(+). The catalysed reaction is L-threonyl-[protein] + ATP = O-phospho-L-threonyl-[protein] + ADP + H(+). Its function is as follows. Casein kinases are operationally defined by their preferential utilization of acidic proteins such as caseins as substrates. The alpha chain contains the catalytic site. May participate in Wnt signaling. Modulates two aspects of male mating behavior; response to hermaphrodite contact and vulval location, acting in the same pathway as lov-1 and pkd-2. In Caenorhabditis elegans, this protein is Casein kinase II subunit alpha (kin-3).